Reading from the N-terminus, the 404-residue chain is MTTQLPNSFRSGPDERGHFGIFGGRFVAETLMPLILDLEKAYAGAKADPSFQREMDGYLKDYVGRPSPLYFAERLTDHLGGAKIYFKREELNHTGSHKVNNVLGQIMVARRMGKKRIIAETGAGQHGVATATLCARFGLECIVFMGAVDVERQQPNVIRMQMLGAKVVPVQSGARTLKDAMNEALRDWVTNVSDTFYCIGTAAGPHPYPMMVRDFQSIIGTETKTQMQAAEGRLPDSLVACIGGGSNALGLFHPFLDDPTVEIFGVEAAGHGLTQLHAASIAGGRPGVLHGNRTYLLMDDDGQIQEGHSISAGLDYPGIGPEHSWLHETGRVTYLSATDDEALAAFQLLSRLEGIIPALEPAHAIAKVLELAPQRPKDHLMVINLSGRGDKDIPQVAEILRGQK.

K98 carries the post-translational modification N6-(pyridoxal phosphate)lysine.

It belongs to the TrpB family. In terms of assembly, tetramer of two alpha and two beta chains. It depends on pyridoxal 5'-phosphate as a cofactor.

It catalyses the reaction (1S,2R)-1-C-(indol-3-yl)glycerol 3-phosphate + L-serine = D-glyceraldehyde 3-phosphate + L-tryptophan + H2O. It functions in the pathway amino-acid biosynthesis; L-tryptophan biosynthesis; L-tryptophan from chorismate: step 5/5. Functionally, the beta subunit is responsible for the synthesis of L-tryptophan from indole and L-serine. The protein is Tryptophan synthase beta chain of Rhodopseudomonas palustris (strain BisB18).